Consider the following 859-residue polypeptide: Photoactivated adenylate cyclase subunit beta-like protein ST- (859 aa).

The region spanning 56–149 (LRRLMYLSKS…GRMYGDWHMK (94 aa)) is the BLUF 1 domain. The tract at residues 420–444 (RPPIFDDTPKSNPRPRTPGYGGRQR) is disordered. One can recognise a BLUF 2 domain in the interval 471-563 (LTTLTYISQA…RVYTSEWTLT (93 aa)). Positions 814–859 (ARSGEQPLTEPEQAKPDFRVSPGRDRHGVSGRRSNSSQGKGSIQVG) are disordered. Positions 825 to 841 (EQAKPDFRVSPGRDRHG) are enriched in basic and acidic residues. The segment covering 845 to 859 (RRSNSSQGKGSIQVG) has biased composition (polar residues).

Heterotetramer of two alpha and two beta subunits.

It localises to the cell projection. The protein localises to the cilium. It is found in the flagellum. The sequence is that of Photoactivated adenylate cyclase subunit beta-like protein ST- from Euglena gracilis.